The following is a 211-amino-acid chain: UPF0056 membrane protein BUsg_257 (211 aa).

The next 6 helical transmembrane spans lie at Phe-14 to Met-34, Ala-54 to Ile-74, Ile-76 to Ser-96, Val-116 to Trp-136, Ser-144 to Phe-164, and Ile-185 to Ile-205.

It belongs to the UPF0056 (MarC) family.

The protein localises to the cell membrane. This Buchnera aphidicola subsp. Schizaphis graminum (strain Sg) protein is UPF0056 membrane protein BUsg_257.